The following is a 101-amino-acid chain: Small ribosomal subunit protein bS18c (101 aa).

This sequence belongs to the bacterial ribosomal protein bS18 family. In terms of assembly, part of the 30S ribosomal subunit.

The protein localises to the plastid. It localises to the chloroplast. The polypeptide is Small ribosomal subunit protein bS18c (Lactuca sativa (Garden lettuce)).